The sequence spans 140 residues: Cysteine proteinase inhibitor 1 (140 aa).

An N-terminal signal peptide occupies residues 1 to 26 (MRKYRVAGLVAALLVLHSLATPSAQA). One can recognise a Cystatin domain in the interval 48-135 (GGVEPVGNEN…KELQEFKPVD (88 aa)). A Secondary area of contact motif is present at residues 91-95 (QVVAG).

This sequence belongs to the cystatin family. Phytocystatin subfamily.

The protein resides in the secreted. In terms of biological role, there are two distinct cystatins in rice seeds (Oryzacystatin-1 and -2) with different specificities against cysteine proteinases. May be involved in the control of germination by inhibition of endogenous cysteine proteinases. May play a role in defense by inhibiting exogenous proteases such as those present in digestive tracks of insects and nematodes. This Oryza sativa subsp. japonica (Rice) protein is Cysteine proteinase inhibitor 1.